The following is a 2212-amino-acid chain: Voltage-dependent P/Q-type calcium channel subunit alpha-1A (2212 aa).

Residues 1-100 (MARFGDEMPG…KYAKKITEWP (100 aa)) lie on the Cytoplasmic side of the membrane. One copy of the I repeat lies at 87–365 (NVVRKYAKKI…LVLGVLSGEF (279 aa)). A helical membrane pass occupies residues 101 to 119 (PFEYMILATIIANCIVLAL). The Extracellular segment spans residues 120-138 (EQHLPDDDKTPMSERLDDT). The helical transmembrane segment at 139–156 (EPYFIGIFCFEAGIKIVA) threads the bilayer. The Cytoplasmic segment spans residues 157–168 (LGFAFHKGSYLR). Residues 169–184 (NGWNVMDFVVVLTGIL) traverse the membrane as a helical segment. Topologically, residues 185-192 (ATVGTEFD) are extracellular. Residues 193 to 211 (LRTLRAVRVLRPLKLVSGI) traverse the membrane as a helical segment. The Cytoplasmic segment spans residues 212 to 230 (PSLQVVLKSIMKAMIPLLQ). Residues 231-250 (IGLLLFFAILIFAIIGLEFY) form a helical membrane-spanning segment. Topologically, residues 251-337 (MGKFHTTCFE…NSNDASGNTW (87 aa)) are extracellular. Residue Asn285 is glycosylated (N-linked (GlcNAc...) asparagine). Glu320 lines the Ca(2+) pocket. Residues 338 to 362 (NWLYFIPLIIIGSFFMLNLVLGVLS) form a helical membrane-spanning segment. Topologically, residues 363–489 (GEFAKERERV…FYIRRMVKTQ (127 aa)) are cytoplasmic. Residues 385-402 (QQIERELNGYMEWISKAE) form a binding to the beta subunit region. Thr411 carries the post-translational modification Phosphothreonine. 2 positions are modified to phosphoserine: Ser450 and Ser453. The II repeat unit spans residues 475–719 (ERRMRFYIRR…VFLAIAVDNL (245 aa)). Residues 490–509 (AFYWTVLSLVALNTLWLAIV) traverse the membrane as a helical segment. At 510–523 (HYNQPEWLSDFLYY) the chain is on the extracellular side. A helical membrane pass occupies residues 524-543 (AEFIFLGLFMSEMFIKMYGL). Residues 544–551 (GTRPYFHS) lie on the Cytoplasmic side of the membrane. Residues 552-570 (SFNCFDCGVIIGSIFEVIW) traverse the membrane as a helical segment. The Extracellular portion of the chain corresponds to 571–580 (AVIKPGTSFG). The helical transmembrane segment at 581–599 (ISVLRALRLLRIFKVTKYW) threads the bilayer. At 600 to 618 (ASLRNLVVSLLNSMKSIIS) the chain is on the cytoplasmic side. Residues 619–638 (LLFLLFLFIVVFALLGMQLF) form a helical membrane-spanning segment. Residues 639–691 (GGQFNFDEGTPPTNFDTFPAAIMTVFQILTGEDWNEVMYDEIKSQGGVQGGMV) lie on the Extracellular side of the membrane. Glu670 is a Ca(2+) binding site. Residues 692–716 (FSIYFIVLTLFGNYTLLNVFLAIAV) form a helical membrane-spanning segment. At 717 to 1190 (DNLANAQELT…TNPLRRLCHY (474 aa)) the chain is on the cytoplasmic side. Residues Ser752, Ser755, and Ser792 each carry the phosphoserine modification. Basic and acidic residues-rich tracts occupy residues 814–824 (PDVKTHLDRPL), 850–862 (RPRESARDPDARR), 871–924 (APGR…EGEP), and 932–958 (RPGDEPDDRPERRPRPRDATRPARAAD). 2 disordered regions span residues 814-1117 (PDVK…RKPE) and 1137-1170 (VNKNANPDPLPKKEEEKKEEEEADPGEDGPKPMP). 3 positions are modified to phosphoserine: Ser1038, Ser1042, and Ser1051. The segment covering 1056–1073 (GNSTNPGPALATNPQNAA) has biased composition (polar residues). Residues 1074–1083 (SRRTPNNPGN) show a composition bias toward low complexity. Residues 1094 to 1111 (ENSLIVTNPSSTQPNSAK) show a composition bias toward polar residues. Residues 1153 to 1163 (KKEEEEADPGE) show a composition bias toward acidic residues. The stretch at 1182–1465 (NPLRRLCHYI…IFVALIIITF (284 aa)) is one III repeat. Residues 1191–1214 (ILNLRYFEMCILMVIAMSSIALAA) form a helical membrane-spanning segment. The Extracellular portion of the chain corresponds to 1215–1231 (EDPVQPNAPRNNVLRYF). The chain crosses the membrane as a helical span at residues 1232 to 1251 (DYVFTGVFTFEMVIKMIDLG). Over 1252-1258 (LVLHQGA) the chain is Cytoplasmic. Residues 1259–1282 (YFRDLWNILDFIVVSGALVAFAFT) form a helical membrane-spanning segment. Topologically, residues 1283–1293 (GNSKGKDINTI) are extracellular. A helical membrane pass occupies residues 1294–1311 (KSLRVLRVLRPLKTIKRL). At 1312–1330 (PKLKAVFDCVVNSLKNVFN) the chain is on the cytoplasmic side. Residues 1331–1350 (ILIVYMLFMFIFAVVAVQLF) traverse the membrane as a helical segment. Residues 1351–1437 (KGKFFHCTDE…QGPSPGYRME (87 aa)) lie on the Extracellular side of the membrane. Glu1411 lines the Ca(2+) pocket. The chain crosses the membrane as a helical span at residues 1438 to 1462 (MSIFYVVYFVVFPFFFVNIFVALII). Topologically, residues 1463 to 1518 (ITFQEQGDKMMEEYSLEKNERACIDFAISAKPLTRHMPQNKQSFQYRMWQFVVSPP) are cytoplasmic. The stretch at 1502 to 1765 (NKQSFQYRMW…LFVAVIMDNF (264 aa)) is one IV repeat. Residues 1519 to 1537 (FEYTIMAMIALNTIVLMMK) traverse the membrane as a helical segment. Over 1538–1551 (FYGASVAYENALRV) the chain is Extracellular. The helical transmembrane segment at 1552 to 1573 (FNIVFTSLFSLECVLKVMAFGI) threads the bilayer. Residues 1574 to 1580 (LNYFRDA) lie on the Cytoplasmic side of the membrane. Residues 1581–1600 (WNIFDFVTVLGSITDILVTE) form a helical membrane-spanning segment. Over 1601 to 1607 (FGNNFIN) the chain is Extracellular. Asn1607 is a glycosylation site (N-linked (GlcNAc...) asparagine). The chain crosses the membrane as a helical span at residues 1608–1626 (LSFLRLFRAARLIKLLRQG). The Cytoplasmic portion of the chain corresponds to 1627 to 1645 (YTIRILLWTFVQSFKALPY). Residues 1646–1665 (VCLLIAMLFFIYAIIGMQVF) traverse the membrane as a helical segment. Over 1666–1737 (GNIGIDGEDE…IQKPECGNEF (72 aa)) the chain is Extracellular. Residues 1738-1763 (AYFYFVSFIFLCSFLMLNLFVAVIMD) form a helical membrane-spanning segment. Residues 1764–2212 (NFEYLTRDSS…EGREHATHRQ (449 aa)) lie on the Cytoplasmic side of the membrane. Phosphothreonine is present on Thr1935. The tract at residues 1940 to 2212 (QRMEPPSPTQ…EGREHATHRQ (273 aa)) is disordered. Composition is skewed to polar residues over residues 1948–1963 (TQEGGPSQNALPSTQL) and 1972–1997 (QESSMKESPSWVTQRAQEMFQKTGTW). Phosphoserine occurs at positions 1998, 2016, 2028, 2030, 2071, and 2091. The segment covering 2008–2017 (PNSQPNSQSV) has biased composition (polar residues). Over residues 2018–2034 (EMREMGTDGYSDSEHYL) the composition is skewed to basic and acidic residues. Residues 2064–2073 (LSTISDTSPM) are compositionally biased toward polar residues. Composition is skewed to basic and acidic residues over residues 2085-2102 (RRLDDYSLERVPPEENQR) and 2143-2153 (PSKDRDQDRGR). Positions 2154 to 2172 (PKDRKHRPHHHHHHHHHHP) are enriched in basic residues. Over residues 2173–2212 (PAPDRERYAQERPDTGRARAREQRWSRSPSEGREHATHRQ) the composition is skewed to basic and acidic residues.

Belongs to the calcium channel alpha-1 subunit (TC 1.A.1.11) family. CACNA1A subfamily. Voltage-dependent calcium channels are multisubunit complexes, consisting of alpha-1, alpha-2, beta and delta subunits in a 1:1:1:1 ratio. The channel activity is directed by the pore-forming and voltage-sensitive alpha-1 subunit. In many cases, this subunit is sufficient to generate voltage-sensitive calcium channel activity. The auxiliary subunits beta and alpha-2/delta linked by a disulfide bridge regulate the channel activity. Interacts (via C-terminal CDB motif) with CABP1 in the pre- and postsynaptic membranes. Interacts with the spider omega-agatoxin-IVA (AC P30288). Interacts with TSPOAP1. As to expression, brain specific. Purkinje cells contain predominantly P-type VSCC, the Q-type being a prominent calcium current in cerebellar granule cells. Also found in heart, in kidney distal convoluted tubule (DCT), and in pituitary.

It is found in the cell membrane. The enzyme catalyses Ca(2+)(in) = Ca(2+)(out). Functionally, voltage-sensitive calcium channels (VSCC) mediate the entry of calcium ions into excitable cells and are also involved in a variety of calcium-dependent processes, including muscle contraction, hormone or neurotransmitter release, gene expression, cell motility, cell division and cell death. The isoform alpha-1A gives rise to P and/or Q-type calcium currents. P/Q-type calcium channels belong to the 'high-voltage activated' (HVA) group and are specifically blocked by the spider omega-agatoxin-IVA (AC P30288). They are however insensitive to dihydropyridines (DHP). The polypeptide is Voltage-dependent P/Q-type calcium channel subunit alpha-1A (Rattus norvegicus (Rat)).